The following is a 286-amino-acid chain: Aquaporin PIP1-1 (286 aa).

The disordered stretch occupies residues 1 to 34 (MEGKEEDVRLGANKFSERQPIGTAAQSDKGYKEP). Over 1-54 (MEGKEEDVRLGANKFSERQPIGTAAQSDKGYKEPPPAPLFEPGELTSWSFYRAG) the chain is Cytoplasmic. Residues 55–75 (IAEFMATFLFLYITILTVMGV) traverse the membrane as a helical segment. Residues 76 to 88 (VKSNSKCSTVGIQ) are Extracellular-facing. Residues 89-109 (GIAWAFGGMIFALVYCTAGIS) traverse the membrane as a helical segment. The Cytoplasmic portion of the chain corresponds to 110-131 (GGHINPAVTFGLFLARKLSLTR). The NPA 1 signature appears at 114–116 (NPA). A helical membrane pass occupies residues 132 to 152 (ALFYMVMQCLGAICGAGVVKG). The Extracellular portion of the chain corresponds to 153–174 (YQKGLYESNGGGANVVAPGYTK). A helical membrane pass occupies residues 175-195 (GDGLGAEIVGTFILVYTVFSA). Over 196-208 (TDAKRNARDSHVP) the chain is Cytoplasmic. The helical transmembrane segment at 209–229 (ILAPLPIGFAVFLVHLATIPI) threads the bilayer. Residues 230–256 (TGTGINPARSLGAAIIYNKKHAWDDHW) lie on the Extracellular side of the membrane. The NPA 2 motif lies at 235 to 237 (NPA). A helical transmembrane segment spans residues 257 to 277 (IFWVGPFIGAALAAIYHQIVI). The Cytoplasmic portion of the chain corresponds to 278-286 (RAIPFKSRP).

Belongs to the MIP/aquaporin (TC 1.A.8) family. PIP (TC 1.A.8.11) subfamily. Expressed in leaves, roots, stems, flowers and fruits, with highest levels in roots.

It localises to the cell membrane. Its function is as follows. Water channel required to facilitate the transport of water across cell membrane; mercury-insensitive. Promotes primary root elongation and root hair formation. Contributes to the tolerance to multiple abiotic stresses including salt (NaCl), cold and water deprivation, by modulating cytosolic K(+)/Na(+) ratio, maintaining osmotic balance, and reducing membrane injury (e.g. oxidative injury). Also regulates the expression of abscisic acid (ABA)-responsive genes during dehydration and salt stresses. This is Aquaporin PIP1-1 from Musa acuminata (Banana).